Consider the following 458-residue polypeptide: Argininosuccinate lyase (458 aa).

Belongs to the lyase 1 family. Argininosuccinate lyase subfamily.

Its subcellular location is the cytoplasm. It carries out the reaction 2-(N(omega)-L-arginino)succinate = fumarate + L-arginine. Its pathway is amino-acid biosynthesis; L-arginine biosynthesis; L-arginine from L-ornithine and carbamoyl phosphate: step 3/3. This Geobacter sulfurreducens (strain ATCC 51573 / DSM 12127 / PCA) protein is Argininosuccinate lyase.